The following is a 317-amino-acid chain: Putrescine transport system permease protein PotH (317 aa).

Residues 1–31 lie on the Cytoplasmic side of the membrane; sequence MSTLEPAAQSKPPGGFKLWLSQLQMKHGRKL. A helical transmembrane segment spans residues 32–51; sequence VIALPYIWLILLFLLPFLIV. Over 52-104 the chain is Periplasmic; the sequence is FKISLAEMARAIPPYTELMEWADGQLSITLNLGNFLQLTDDPLYFDAYLQSLQ. In terms of domain architecture, ABC transmembrane type-1 spans 99–305; that stretch reads YLQSLQVAAI…LLLIVPIMWF (207 aa). Residues 105-124 form a helical membrane-spanning segment; the sequence is VAAISTFCCLLIGYPLAWAV. Topologically, residues 125-133 are cytoplasmic; it reads AHSKPSTRN. The chain crosses the membrane as a helical span at residues 134–153; that stretch reads ILLLLVILPSWTSFLIRVYA. Over 154–184 the chain is Periplasmic; that stretch reads WMGILKNNGVLNNFLLWLGVIDQPLTILHTN. A helical transmembrane segment spans residues 185-204; that stretch reads LAVYIGIVYAYVPFMVLPIY. Residues 205–239 lie on the Cytoplasmic side of the membrane; sequence TALIRIDYSLVEAALDLGARPLKTFFTVIVPLTKG. A helical membrane pass occupies residues 240–259; sequence GIIAGSMLVFIPAVGEFVIP. Over 260 to 284 the chain is Periplasmic; the sequence is ELLGGPDSIMIGRVLWQEFFNNRDW. Residues 285-304 form a helical membrane-spanning segment; sequence PVASAVAIIMLLLLIVPIMW. The Cytoplasmic segment spans residues 305–317; it reads FHKHQQKSVGEHG.

This sequence belongs to the binding-protein-dependent transport system permease family. CysTW subfamily. In terms of assembly, the complex is composed of two ATP-binding proteins (PotG), two transmembrane proteins (PotH and PotI) and a solute-binding protein (PotF).

Its subcellular location is the cell inner membrane. Transport is feedback inhibited by intracellular polyamines. Its function is as follows. Part of the ABC transporter complex PotFGHI involved in putrescine uptake. Responsible for the translocation of the substrate across the membrane. Imports putrescine for maintenance of the optimal concentration of polyamines necessary for cell growth in the presence of glucose. The polypeptide is Putrescine transport system permease protein PotH (Escherichia coli (strain K12)).